The sequence spans 417 residues: Serine hydroxymethyltransferase (417 aa).

Residues L121 and 125-127 contribute to the (6S)-5,6,7,8-tetrahydrofolate site; that span reads GHL. K229 is subject to N6-(pyridoxal phosphate)lysine. 355–357 is a binding site for (6S)-5,6,7,8-tetrahydrofolate; that stretch reads SPF.

The protein belongs to the SHMT family. Homodimer. Pyridoxal 5'-phosphate is required as a cofactor.

It is found in the cytoplasm. The catalysed reaction is (6R)-5,10-methylene-5,6,7,8-tetrahydrofolate + glycine + H2O = (6S)-5,6,7,8-tetrahydrofolate + L-serine. It participates in one-carbon metabolism; tetrahydrofolate interconversion. The protein operates within amino-acid biosynthesis; glycine biosynthesis; glycine from L-serine: step 1/1. Its function is as follows. Catalyzes the reversible interconversion of serine and glycine with tetrahydrofolate (THF) serving as the one-carbon carrier. This reaction serves as the major source of one-carbon groups required for the biosynthesis of purines, thymidylate, methionine, and other important biomolecules. Also exhibits THF-independent aldolase activity toward beta-hydroxyamino acids, producing glycine and aldehydes, via a retro-aldol mechanism. The polypeptide is Serine hydroxymethyltransferase (Buchnera aphidicola subsp. Acyrthosiphon pisum (strain APS) (Acyrthosiphon pisum symbiotic bacterium)).